The sequence spans 128 residues: Fluoride-specific ion channel FluC (128 aa).

Transmembrane regions (helical) follow at residues 5-25 (ALVA…SMVI), 32-52 (TFPW…GLFA), 70-90 (FFMV…LQTL), and 106-126 (VGSV…ATII). Na(+) is bound by residues glycine 77 and threonine 80.

It belongs to the fluoride channel Fluc/FEX (TC 1.A.43) family.

The protein resides in the cell inner membrane. It carries out the reaction fluoride(in) = fluoride(out). Its activity is regulated as follows. Na(+) is not transported, but it plays an essential structural role and its presence is essential for fluoride channel function. In terms of biological role, fluoride-specific ion channel. Important for reducing fluoride concentration in the cell, thus reducing its toxicity. The protein is Fluoride-specific ion channel FluC of Paramagnetospirillum magneticum (strain ATCC 700264 / AMB-1) (Magnetospirillum magneticum).